The chain runs to 327 residues: GTPase Obg (327 aa).

An Obg domain is found at 2–160; that stretch reads HLFKDSLNLI…LNLRLELSLI (159 aa). One can recognise an OBG-type G domain in the interval 161–326; it reads ADVGLVGLPN…LVSEFFSLAK (166 aa). GTP contacts are provided by residues 167-174, 192-196, 213-216, 280-283, and 307-309; these read GLPNAGKS, FTTKI, DLPG, SKLD, and SIY. 2 residues coordinate Mg(2+): S174 and T194.

Belongs to the TRAFAC class OBG-HflX-like GTPase superfamily. OBG GTPase family. Monomer. Mg(2+) serves as cofactor.

It localises to the cytoplasm. In terms of biological role, an essential GTPase which binds GTP, GDP and possibly (p)ppGpp with moderate affinity, with high nucleotide exchange rates and a fairly low GTP hydrolysis rate. Plays a role in control of the cell cycle, stress response, ribosome biogenesis and in those bacteria that undergo differentiation, in morphogenesis control. This Borrelia recurrentis (strain A1) protein is GTPase Obg.